The chain runs to 469 residues: Zinc finger CCCH domain-containing protein 30 (469 aa).

The C3H1-type zinc-finger motif lies at 415-443 (VRPMKPCAYFNSPKGCRNGASCTFLHDAS). Residues 444 to 469 (APTRKDHQKQKGSKRIKLDNTMGGRN) are disordered. A compositionally biased stretch (basic residues) spans 449-458 (DHQKQKGSKR).

This Oryza sativa subsp. japonica (Rice) protein is Zinc finger CCCH domain-containing protein 30.